The following is a 209-amino-acid chain: Thymidylate kinase (209 aa).

10 to 17 (GIDGCGKS) is an ATP binding site.

Belongs to the thymidylate kinase family.

The catalysed reaction is dTMP + ATP = dTDP + ADP. Functionally, phosphorylation of dTMP to form dTDP in both de novo and salvage pathways of dTTP synthesis. The polypeptide is Thymidylate kinase (Synechococcus sp. (strain CC9902)).